The primary structure comprises 340 residues: Beta-hexosaminidase (340 aa).

Residues Asp-60, Arg-68, Arg-127, and 157–158 each bind substrate; that span reads KH. His-170 (proton donor/acceptor) is an active-site residue. The active-site Nucleophile is Asp-242.

The protein belongs to the glycosyl hydrolase 3 family. NagZ subfamily.

The protein resides in the cytoplasm. It carries out the reaction Hydrolysis of terminal non-reducing N-acetyl-D-hexosamine residues in N-acetyl-beta-D-hexosaminides.. It participates in cell wall biogenesis; peptidoglycan recycling. Plays a role in peptidoglycan recycling by cleaving the terminal beta-1,4-linked N-acetylglucosamine (GlcNAc) from peptide-linked peptidoglycan fragments, giving rise to free GlcNAc, anhydro-N-acetylmuramic acid and anhydro-N-acetylmuramic acid-linked peptides. In Glaesserella parasuis serovar 5 (strain SH0165) (Haemophilus parasuis), this protein is Beta-hexosaminidase.